We begin with the raw amino-acid sequence, 355 residues long: tRNA-specific 2-thiouridylase MnmA (355 aa).

Residues 6–13 (LLSGGVDS) and leucine 33 each bind ATP. Cysteine 100 functions as the Nucleophile in the catalytic mechanism. Cysteine 100 and cysteine 195 are disulfide-bonded. Residue glycine 123 participates in ATP binding. The tract at residues 145–147 (KDQ) is interaction with tRNA. Cysteine 195 serves as the catalytic Cysteine persulfide intermediate.

It belongs to the MnmA/TRMU family.

It is found in the cytoplasm. It carries out the reaction S-sulfanyl-L-cysteinyl-[protein] + uridine(34) in tRNA + AH2 + ATP = 2-thiouridine(34) in tRNA + L-cysteinyl-[protein] + A + AMP + diphosphate + H(+). Its function is as follows. Catalyzes the 2-thiolation of uridine at the wobble position (U34) of tRNA, leading to the formation of s(2)U34. This is tRNA-specific 2-thiouridylase MnmA from Borreliella burgdorferi (strain ATCC 35210 / DSM 4680 / CIP 102532 / B31) (Borrelia burgdorferi).